The following is a 365-amino-acid chain: Alanine racemase (365 aa).

Residue lysine 32 is the Proton acceptor; specific for D-alanine of the active site. An N6-(pyridoxal phosphate)lysine modification is found at lysine 32. Arginine 128 contributes to the substrate binding site. Catalysis depends on tyrosine 257, which acts as the Proton acceptor; specific for L-alanine. Methionine 305 contributes to the substrate binding site.

The protein belongs to the alanine racemase family. It depends on pyridoxal 5'-phosphate as a cofactor.

It catalyses the reaction L-alanine = D-alanine. Its pathway is amino-acid biosynthesis; D-alanine biosynthesis; D-alanine from L-alanine: step 1/1. Catalyzes the interconversion of L-alanine and D-alanine. May also act on other amino acids. In Francisella philomiragia subsp. philomiragia (strain ATCC 25017 / CCUG 19701 / FSC 153 / O#319-036), this protein is Alanine racemase (alr).